A 450-amino-acid polypeptide reads, in one-letter code: Glutamate-1-semialdehyde 2,1-aminomutase (450 aa).

N6-(pyridoxal phosphate)lysine is present on K262.

The protein belongs to the class-III pyridoxal-phosphate-dependent aminotransferase family. HemL subfamily. In terms of assembly, homodimer. It depends on pyridoxal 5'-phosphate as a cofactor.

It localises to the cytoplasm. The enzyme catalyses (S)-4-amino-5-oxopentanoate = 5-aminolevulinate. It participates in porphyrin-containing compound metabolism; protoporphyrin-IX biosynthesis; 5-aminolevulinate from L-glutamyl-tRNA(Glu): step 2/2. The polypeptide is Glutamate-1-semialdehyde 2,1-aminomutase (Campylobacter hominis (strain ATCC BAA-381 / DSM 21671 / CCUG 45161 / LMG 19568 / NCTC 13146 / CH001A)).